Consider the following 351-residue polypeptide: Glycerol-3-phosphate dehydrogenase 1-like protein (351 aa).

11–16 (GSGNWG) contributes to the NAD(+) binding site. Lys-121 lines the substrate pocket. Ala-154 provides a ligand contact to NAD(+). Lys-205 serves as the catalytic Proton acceptor. 3 residues coordinate NAD(+): Arg-271, Lys-298, and Gln-300. A substrate-binding site is contributed by 271–272 (RN).

Belongs to the NAD-dependent glycerol-3-phosphate dehydrogenase family.

It is found in the cytoplasm. It catalyses the reaction sn-glycerol 3-phosphate + NAD(+) = dihydroxyacetone phosphate + NADH + H(+). In terms of biological role, plays a role in regulating cardiac sodium current. This is Glycerol-3-phosphate dehydrogenase 1-like protein (gpd1l) from Danio rerio (Zebrafish).